A 158-amino-acid chain; its full sequence is Cysteine-rich venom protein VAR7 (158 aa).

The signal sequence occupies residues 1–22 (MILLKLYLTLAAILCQSRGTTS). The 118-residue stretch at 41–158 (NKHNDLRRTV…MGCAINLCPN (118 aa)) folds into the SCP domain. A disulfide bridge links C77 with C156.

It belongs to the CRISP family. In terms of processing, contains 8 disulfide bonds. Expressed by the venom gland.

It is found in the secreted. In terms of biological role, blocks ryanodine receptors, and potassium channels. The polypeptide is Cysteine-rich venom protein VAR7 (Varanus acanthurus (Ridge-tailed monitor)).